A 118-amino-acid chain; its full sequence is Succinate dehydrogenase assembly factor 1, mitochondrial (118 aa).

The short motif at 14-16 (LYR) is the LYR motif 1; required for interaction with HSC20 element. The short motif at 53–55 (LYR) is the LYR motif 2; not required for interaction with HSC20 element. The interval 53–65 (LYRRGRRQLQMLR) is interaction with SDHB. Residues 72-118 (MGAFVRTRGPTEESNGAGAPGTLSGEGDDPRKPLDSMRTPKTPLDGR) form a disordered region.

This sequence belongs to the complex I LYR family. SDHAF1 subfamily. In terms of assembly, interacts with SDHB within an SDHA-SDHB subcomplex. Also interacts with the iron-sulfur transfer complex formed by HSC20, HSPA9 and ISCU through direct binding to HSC20. Binding of SDHAF1 to SDHB precedes and is necessary for recruitment of the iron-sulfur transfer complex by SDHAF1.

The protein localises to the mitochondrion matrix. Plays an essential role in the assembly of succinate dehydrogenase (SDH), an enzyme complex (also referred to as respiratory complex II) that is a component of both the tricarboxylic acid (TCA) cycle and the mitochondrial electron transport chain, and which couples the oxidation of succinate to fumarate with the reduction of ubiquinone (coenzyme Q) to ubiquinol. Promotes maturation of the iron-sulfur protein subunit SDHB of the SDH catalytic dimer, protecting it from the deleterious effects of oxidants. May act together with SDHAF3. Contributes to iron-sulfur cluster incorporation into SDHB by binding to SDHB and recruiting the iron-sulfur transfer complex formed by HSC20, HSPA9 and ISCU through direct binding to HSC20. This Bos taurus (Bovine) protein is Succinate dehydrogenase assembly factor 1, mitochondrial.